A 936-amino-acid chain; its full sequence is Phosphoenolpyruvate carboxylase (936 aa).

Active-site residues include His155 and Lys595.

The protein belongs to the PEPCase type 1 family. As to quaternary structure, homotetramer. Requires Mg(2+) as cofactor. Mn(2+) serves as cofactor.

It catalyses the reaction oxaloacetate + phosphate = phosphoenolpyruvate + hydrogencarbonate. Its activity is regulated as follows. Exhibits positive allosteric property with acetyl-CoA and fructose 1,6-bisphosphate, and a negative one with L-aspartate and L-malate. In terms of biological role, forms oxaloacetate, a four-carbon dicarboxylic acid source for the tricarboxylic acid cycle. This chain is Phosphoenolpyruvate carboxylase (ppc), found in Rhodothermus marinus (Rhodothermus obamensis).